The chain runs to 270 residues: Hairy and enhancer of split-related protein helt (270 aa).

Residues 1 to 24 (MNARALYKRPPPVSSSQSEASGKR) form a disordered region. One can recognise a bHLH domain in the interval 59 to 114 (KTPVSHKVIEKRRRDRINRCLNELGKTVPMALAKQNSGKLEKAEILEMTVQYLRAL). The region spanning 136–171 (FHYGYHECMKNLVHYLTTVERMETKDTKYARILAFL) is the Orange domain.

This sequence belongs to the HEY family.

Its subcellular location is the nucleus. Transcriptional repressor which binds preferentially to the canonical E box sequence 5'-CACGCG-3'. The protein is Hairy and enhancer of split-related protein helt (helt) of Danio rerio (Zebrafish).